A 154-amino-acid polypeptide reads, in one-letter code: Large ribosomal subunit protein uL22 (154 aa).

It belongs to the universal ribosomal protein uL22 family. In terms of assembly, part of the 50S ribosomal subunit.

Its function is as follows. This protein binds specifically to 23S rRNA. It makes multiple contacts with different domains of the 23S rRNA in the assembled 50S subunit and ribosome. Functionally, the globular domain of the protein is located near the polypeptide exit tunnel on the outside of the subunit, while an extended beta-hairpin is found that lines the wall of the exit tunnel in the center of the 70S ribosome. This Methanosphaera stadtmanae (strain ATCC 43021 / DSM 3091 / JCM 11832 / MCB-3) protein is Large ribosomal subunit protein uL22.